Here is a 311-residue protein sequence, read N- to C-terminus: tRNA-cytidine(32) 2-sulfurtransferase (311 aa).

The PP-loop motif motif lies at serine 47–serine 52. [4Fe-4S] cluster is bound by residues cysteine 122, cysteine 125, and cysteine 213.

Belongs to the TtcA family. Homodimer. It depends on Mg(2+) as a cofactor. Requires [4Fe-4S] cluster as cofactor.

It is found in the cytoplasm. The catalysed reaction is cytidine(32) in tRNA + S-sulfanyl-L-cysteinyl-[cysteine desulfurase] + AH2 + ATP = 2-thiocytidine(32) in tRNA + L-cysteinyl-[cysteine desulfurase] + A + AMP + diphosphate + H(+). The protein operates within tRNA modification. In terms of biological role, catalyzes the ATP-dependent 2-thiolation of cytidine in position 32 of tRNA, to form 2-thiocytidine (s(2)C32). The sulfur atoms are provided by the cysteine/cysteine desulfurase (IscS) system. The chain is tRNA-cytidine(32) 2-sulfurtransferase from Shigella boydii serotype 4 (strain Sb227).